The sequence spans 109 residues: Cell division protein ZapA (109 aa).

A coiled-coil region spans residues 71–99; the sequence is KTRDYASNMEQRIRMLQQTIEQALLEQGR.

Belongs to the ZapA family. Type 1 subfamily. In terms of assembly, homodimer. Interacts with FtsZ.

The protein localises to the cytoplasm. In terms of biological role, activator of cell division through the inhibition of FtsZ GTPase activity, therefore promoting FtsZ assembly into bundles of protofilaments necessary for the formation of the division Z ring. It is recruited early at mid-cell but it is not essential for cell division. This chain is Cell division protein ZapA, found in Serratia proteamaculans (strain 568).